We begin with the raw amino-acid sequence, 260 residues long: Ribosomal RNA small subunit methyltransferase G (260 aa).

Residues Gly94, Phe99, 117–119 (DST), 145–146 (AE), and Arg164 each bind S-adenosyl-L-methionine. A disordered region spans residues 236-260 (APTPPPYPRSPGTPKRQPLGQSNRP). Residues 237 to 246 (PTPPPYPRSP) show a composition bias toward pro residues.

It belongs to the methyltransferase superfamily. RNA methyltransferase RsmG family.

The protein localises to the cytoplasm. Its function is as follows. Specifically methylates the N7 position of a guanine in 16S rRNA. This chain is Ribosomal RNA small subunit methyltransferase G, found in Synechococcus sp. (strain JA-2-3B'a(2-13)) (Cyanobacteria bacterium Yellowstone B-Prime).